The sequence spans 369 residues: Protein RIC-3 (369 aa).

The first 28 residues, 1–28 (MAYSTVQRVALASGLVLALSLLLPKAFL), serve as a signal peptide directing secretion. Residues 29–95 (SRGKRQEPPP…AGGGGSGRGL (67 aa)) lie on the Lumenal side of the membrane. Residues 30-67 (RGKRQEPPPTPEGKLGRFPPMMHHHQAPSDGQTPGARF) form a disordered region. Residues 96 to 116 (MGQIIPIYGFGIFLYILYILF) traverse the membrane as a helical segment. Topologically, residues 117–369 (KLSKGKTTAE…LRKRNPQGLE (253 aa)) are cytoplasmic. Residues 140–169 (RKITSFELAQLQEKLKETEAAMEKLINRVG) adopt a coiled-coil conformation. The residue at position 202 (Lys-202) is an N6-acetyllysine; alternate. Lys-202 is covalently cross-linked (Glycyl lysine isopeptide (Lys-Gly) (interchain with G-Cter in ubiquitin); alternate). Disordered stretches follow at residues 272-295 (ESDHLGWESLPTDPRAQEDNSVTS) and 316-369 (LAEN…QGLE). The segment covering 332–346 (ETTKEEWSQDFKDEG) has biased composition (basic and acidic residues). A compositionally biased stretch (basic residues) spans 360 to 369 (LRKRNPQGLE).

Belongs to the ric-3 family. As to quaternary structure, monomer and homodimer. Interacts with CHRNA7, CHRNA3, CHRNA4, CHRNB2, CHRNB4 and HTR3A. Broadly expressed, with high levels in muscle, brain, heart, pancreas and testis. In the central nervous system, highest levels are detected in the cerebellum and pituitary gland. Over-expressed in brains from patients with bipolar disease or schizophrenia. Isoform 5 is predominantly expressed in the brain.

It localises to the endoplasmic reticulum membrane. The protein localises to the golgi apparatus membrane. In terms of biological role, molecular chaperone which facilitates proper subunit assembly and surface trafficking of alpha-7 (CHRNA7) and alpha-8 (CHRNA8) nicotinic acetylcholine receptors. May also promote functional expression of homomeric serotoninergic 5-HT3 receptors, and of heteromeric acetylcholine receptors alpha-3/beta-2, alpha-3/beta-4, alpha-4/beta-2 and alpha-4/beta-4. This chain is Protein RIC-3 (RIC3), found in Homo sapiens (Human).